A 516-amino-acid chain; its full sequence is BAR/IMD domain-containing adapter protein 2-like 1 (516 aa).

In terms of domain architecture, IMD spans 1–249 (MSRGPEEVNR…MNMIEEIKTP (249 aa)). Residues 115–148 (MNATLKRYQAEHRNKLDSLEKSQAELKKIRRKSQ) adopt a coiled-coil conformation. Phosphothreonine is present on residues Thr-248 and Thr-257. A phosphoserine mark is found at Ser-261 and Ser-281. Positions 303–328 (NPATAGQSAEKTNNSTANTGDDPSLQ) are disordered. Residue Ser-332 is modified to Phosphoserine. The SH3 domain occupies 340 to 403 (MKKQKVKTIF…PSSYTKLLEE (64 aa)). Thr-413 bears the Phosphothreonine mark. A phosphoserine mark is found at Ser-415, Ser-421, and Ser-423. The disordered stretch occupies residues 454-516 (ADAAKIPSTS…TNDRSAPIIR (63 aa)). Residues 474-485 (ATSTSPSDSNGT) show a composition bias toward polar residues. The segment at 488–516 (PPFLSGENPFATVKLRPTVTNDRSAPIIR) is binds F-actin.

Interacts with RAC1. Binds to F-actin. Interacts with FASLG. Phosphorylated on tyrosine in response to insulin.

It is found in the cytoplasm. It localises to the cytoskeleton. Functionally, may function as adapter protein. Involved in the formation of clusters of actin bundles. Plays a role in the reorganization of the actin cytoskeleton in response to bacterial infection. The chain is BAR/IMD domain-containing adapter protein 2-like 1 (Baiap2l1) from Rattus norvegicus (Rat).